A 1378-amino-acid polypeptide reads, in one-letter code: DNA-directed RNA polymerase subunit beta (1378 aa).

This sequence belongs to the RNA polymerase beta chain family. As to quaternary structure, the RNAP catalytic core consists of 2 alpha, 1 beta, 1 beta' and 1 omega subunit. When a sigma factor is associated with the core the holoenzyme is formed, which can initiate transcription.

The enzyme catalyses RNA(n) + a ribonucleoside 5'-triphosphate = RNA(n+1) + diphosphate. Its function is as follows. DNA-dependent RNA polymerase catalyzes the transcription of DNA into RNA using the four ribonucleoside triphosphates as substrates. This Hyphomonas neptunium (strain ATCC 15444) protein is DNA-directed RNA polymerase subunit beta.